The sequence spans 145 residues: Zinc finger C2H2 protein ECU06_1150 (145 aa).

Residues 35–57 (KDCARYGEAQASKHALLAHARRH) form a C2H2-type 1; atypical zinc finger. A C2H2-type 2 zinc finger spans residues 63-85 (FECHLCGKDYTRSDPLKKHLLRH).

The sequence is that of Zinc finger C2H2 protein ECU06_1150 from Encephalitozoon cuniculi (strain GB-M1) (Microsporidian parasite).